The chain runs to 605 residues: Elongation factor 4 (605 aa).

The tr-type G domain occupies 8–190 (RRVRNFCIVA…AIITRIPPPQ (183 aa)). GTP is bound by residues 20-25 (DHGKST) and 137-140 (NKID).

The protein belongs to the TRAFAC class translation factor GTPase superfamily. Classic translation factor GTPase family. LepA subfamily.

The protein localises to the cell inner membrane. The catalysed reaction is GTP + H2O = GDP + phosphate + H(+). Required for accurate and efficient protein synthesis under certain stress conditions. May act as a fidelity factor of the translation reaction, by catalyzing a one-codon backward translocation of tRNAs on improperly translocated ribosomes. Back-translocation proceeds from a post-translocation (POST) complex to a pre-translocation (PRE) complex, thus giving elongation factor G a second chance to translocate the tRNAs correctly. Binds to ribosomes in a GTP-dependent manner. This chain is Elongation factor 4, found in Treponema pallidum (strain Nichols).